A 582-amino-acid chain; its full sequence is Putative phospholipase B-like 2 (582 aa).

An N-terminal signal peptide occupies residues 1–42 (MTRLIRSKKQFLIRSLHSVFYYLGSLLHSTFEMNVFIGLLLA). Residues N91, N141, N178, N224, and N318 are each glycosylated (N-linked (GlcNAc...) asparagine). C139 and C146 are disulfide-bonded. An intrachain disulfide couples C480 to C482. N502 is a glycosylation site (N-linked (GlcNAc...) asparagine).

It belongs to the phospholipase B-like family.

Its subcellular location is the secreted. Functionally, putative phospholipase. The chain is Putative phospholipase B-like 2 from Caenorhabditis elegans.